A 314-amino-acid polypeptide reads, in one-letter code: Carbamate kinase (314 aa).

This sequence belongs to the carbamate kinase family. As to quaternary structure, homodimer.

It is found in the cytoplasm. The enzyme catalyses hydrogencarbonate + NH4(+) + ATP = carbamoyl phosphate + ADP + H2O + H(+). This chain is Carbamate kinase (cpkA), found in Pyrococcus horikoshii (strain ATCC 700860 / DSM 12428 / JCM 9974 / NBRC 100139 / OT-3).